The sequence spans 84 residues: Large ribosomal subunit protein bL27 (84 aa).

Residues 1–25 (MSHKKAGGSTRNGRDSNAQRRGVKK) are disordered.

Belongs to the bacterial ribosomal protein bL27 family.

This is Large ribosomal subunit protein bL27 from Desulforapulum autotrophicum (strain ATCC 43914 / DSM 3382 / VKM B-1955 / HRM2) (Desulfobacterium autotrophicum).